The following is a 587-amino-acid chain: D-lactate dehydrogenase [cytochrome] 1, mitochondrial (587 aa).

Residues 146–327 enclose the FAD-binding PCMH-type domain; it reads SPEQRPRIIL…TEATVKCHVK (182 aa).

Belongs to the FAD-binding oxidoreductase/transferase type 4 family. FAD is required as a cofactor.

The protein localises to the mitochondrion inner membrane. It carries out the reaction (R)-lactate + 2 Fe(III)-[cytochrome c] = 2 Fe(II)-[cytochrome c] + pyruvate + 2 H(+). Catalyzes the stereospecific oxidation of D-lactate to pyruvate. The protein is D-lactate dehydrogenase [cytochrome] 1, mitochondrial of Saccharomyces cerevisiae (strain ATCC 204508 / S288c) (Baker's yeast).